The primary structure comprises 70 residues: MPNFFRNGCIALVGSVAAMGAAHAEGGIAEAAGKALDSAQSDVTITAPKVMMVVATVVGVGILINMMRKA.

The N-terminal stretch at methionine 1–alanine 24 is a signal peptide.

As to quaternary structure, homomer.

The protein resides in the fimbrium. Its function is as follows. Fimbriae (also called pili) are polar filaments radiating from the surface of the bacterium to a length of 0.5-1.5 micrometers and numbering 100-300 per cell. They enable bacteria to colonize the epithelium of specific host organs. Flexible pili possess hemagglutinating function. This is Flexible pilin (aerA) from Aeromonas hydrophila.